The following is a 327-amino-acid chain: tRNA dimethylallyltransferase (327 aa).

ATP is bound at residue 18 to 25; the sequence is GPTASGKT. 20–25 contacts substrate; that stretch reads TASGKT. Interaction with substrate tRNA stretches follow at residues 43-46, 167-171, and 251-256; these read DSAL, QRVQR, and RCVGYR.

This sequence belongs to the IPP transferase family. As to quaternary structure, monomer. Requires Mg(2+) as cofactor.

It carries out the reaction adenosine(37) in tRNA + dimethylallyl diphosphate = N(6)-dimethylallyladenosine(37) in tRNA + diphosphate. Its function is as follows. Catalyzes the transfer of a dimethylallyl group onto the adenine at position 37 in tRNAs that read codons beginning with uridine, leading to the formation of N6-(dimethylallyl)adenosine (i(6)A). The sequence is that of tRNA dimethylallyltransferase from Methylibium petroleiphilum (strain ATCC BAA-1232 / LMG 22953 / PM1).